The following is a 510-amino-acid chain: Maturase K (510 aa).

It belongs to the intron maturase 2 family. MatK subfamily.

The protein resides in the plastid. The protein localises to the chloroplast. Its function is as follows. Usually encoded in the trnK tRNA gene intron. Probably assists in splicing its own and other chloroplast group II introns. In Gratiola officinalis (Hedgehyssop), this protein is Maturase K.